We begin with the raw amino-acid sequence, 437 residues long: O-acetyl-L-homoserine sulfhydrylase (437 aa).

K216 bears the N6-(pyridoxal phosphate)lysine mark.

Belongs to the trans-sulfuration enzymes family. As to quaternary structure, homohexamer. The cofactor is pyridoxal 5'-phosphate.

The enzyme catalyses O-acetyl-L-homoserine + hydrogen sulfide = L-homocysteine + acetate. The catalysed reaction is O-acetyl-L-homoserine + methanethiol = L-methionine + acetate + H(+). The protein operates within amino-acid biosynthesis; L-methionine biosynthesis via de novo pathway; L-homocysteine from O-acetyl-L-homoserine: step 1/1. Inhibited by methionine and cystathionine. Functionally, catalyzes the conversion of O-acetyl-L-homoserine (OAH) into homocysteine in the methionine biosynthesis pathway. Can also use dimethyldisulfide and methanethiol as reduced sulfur sources, leading to the direct formation of methionine. Has weak cystathionine gamma-synthase activity. The polypeptide is O-acetyl-L-homoserine sulfhydrylase (Corynebacterium glutamicum (strain ATCC 13032 / DSM 20300 / JCM 1318 / BCRC 11384 / CCUG 27702 / LMG 3730 / NBRC 12168 / NCIMB 10025 / NRRL B-2784 / 534)).